The sequence spans 407 residues: Peptidase T (407 aa).

His78 is a Zn(2+) binding site. Asp80 is an active-site residue. Asp139 contributes to the Zn(2+) binding site. Glu173 functions as the Proton acceptor in the catalytic mechanism. 3 residues coordinate Zn(2+): Glu174, Asp196, and His378.

It belongs to the peptidase M20B family. The cofactor is Zn(2+).

It localises to the cytoplasm. The enzyme catalyses Release of the N-terminal residue from a tripeptide.. In terms of biological role, cleaves the N-terminal amino acid of tripeptides. The polypeptide is Peptidase T (Macrococcus caseolyticus (strain JCSC5402) (Macrococcoides caseolyticum)).